A 304-amino-acid polypeptide reads, in one-letter code: GTPase Era (304 aa).

Residues 7–178 enclose the Era-type G domain; the sequence is KCGVVAVLGA…KNALAALMPE (172 aa). The tract at residues 15 to 22 is G1; the sequence is GAPNAGKS. 15–22 lines the GTP pocket; that stretch reads GAPNAGKS. Positions 41 to 45 are G2; that stretch reads QTTRA. Residues 66 to 69 are G3; that stretch reads DTPG. GTP is bound by residues 66 to 70 and 128 to 131; these read DTPGI and NKVD. Residues 128–131 are G4; sequence NKVD. A G5 region spans residues 157-159; that stretch reads VSA. Positions 209–286 constitute a KH type-2 domain; it reads LHEELPYDSA…HLFLHVKVDE (78 aa).

This sequence belongs to the TRAFAC class TrmE-Era-EngA-EngB-Septin-like GTPase superfamily. Era GTPase family. As to quaternary structure, monomer.

It is found in the cytoplasm. The protein localises to the cell inner membrane. An essential GTPase that binds both GDP and GTP, with rapid nucleotide exchange. Plays a role in 16S rRNA processing and 30S ribosomal subunit biogenesis and possibly also in cell cycle regulation and energy metabolism. In Erythrobacter litoralis (strain HTCC2594), this protein is GTPase Era.